The primary structure comprises 1691 residues: ADAMTS-like protein 3 (1691 aa).

A signal peptide spans 1-26; sequence MASWTSPWWVLIGMVFMHSPLPQTTA. A TSP type-1 1 domain is found at 75–124; that stretch reads DGNWDAWGDWSDCSRTCGGGASYSLRRCLTGRNCEGQNIRYKTCSNHDCP. 3 cysteine pairs are disulfide-bonded: cysteine 87/cysteine 118, cysteine 91/cysteine 123, and cysteine 102/cysteine 108. An N-linked (GlcNAc...) asparagine glycan is attached at asparagine 293. TSP type-1 domains follow at residues 418–468, 478–535, and 564–626; these read PLPR…APKP, DCPK…IPCY, and EEPT…EACD. 3 cysteine pairs are disulfide-bonded: cysteine 576-cysteine 620, cysteine 580-cysteine 625, and cysteine 591-cysteine 609. A glycan (N-linked (GlcNAc...) asparagine) is linked at asparagine 681. 3 TSP type-1 domains span residues 703–760, 763–818, and 819–881; these read CPPR…FDCP, WHIE…ARTD, and CPPH…PECS. The N-linked (GlcNAc...) asparagine glycan is linked to asparagine 797. Cystine bridges form between cysteine 831/cysteine 875, cysteine 835/cysteine 880, and cysteine 846/cysteine 863. Residues 896–992 enclose the Ig-like C2-type 1 domain; it reads PQILSVQRVY…IAGSAQETVV (97 aa). 2 N-linked (GlcNAc...) asparagine glycosylation sites follow: asparagine 915 and asparagine 927. Cysteine 934 and cysteine 982 are oxidised to a cystine. Asparagine 1102 is a glycosylation site (N-linked (GlcNAc...) asparagine). The tract at residues 1146–1184 is disordered; it reads PPAAQLRGETGSVSQSSHAKNSGKLTFKPKGPVLMRQSQ. The segment covering 1156–1169 has biased composition (polar residues); that stretch reads GSVSQSSHAKNSGK. The 95-residue stretch at 1185-1279 folds into the Ig-like C2-type 2 domain; sequence PPSISFNKTI…GSDVESSSVL (95 aa). Asparagine 1191 carries N-linked (GlcNAc...) asparagine glycosylation. Cysteine 1215 and cysteine 1263 form a disulfide bridge. N-linked (GlcNAc...) asparagine glycosylation is found at asparagine 1292, asparagine 1316, asparagine 1330, asparagine 1343, asparagine 1349, asparagine 1356, asparagine 1432, asparagine 1516, asparagine 1574, and asparagine 1591. Residues 1296-1378 form the Ig-like C2-type 3 domain; sequence PEHNHLSVVV…ATNALGKAVA (83 aa). A disulfide bond links cysteine 1321 and cysteine 1367. 2 TSP type-1 domains span residues 1424 to 1482 and 1483 to 1545; these read QEPF…NIRD and CPAR…HPCV. The TSP type-1 10 domain occupies 1597–1644; that stretch reads CDVCWHTGPWKPCTAACGRGFQSRKVDCIHTRSCKPVAKRHCVQKKKP. Residues 1655–1691 enclose the PLAC domain; sequence CDRDCTDTTHYCMFVKHLNLCSLDRYKQRCCQSCQEG.

Post-translationally, glycosylated. Can be O-fucosylated by POFUT2 on a serine or a threonine residue found within the consensus sequence C1-X(2)-(S/T)-C2-G of the TSP type-1 repeat domains where C1 and C2 are the first and second cysteine residue of the repeat, respectively. Fucosylated repeats can then be further glycosylated by the addition of a beta-1,3-glucose residue by the glucosyltransferase, B3GALTL. Fucosylation mediates the efficient secretion of ADAMTS family members. Can also be C-glycosylated with one or two mannose molecules on tryptophan residues within the consensus sequence W-X-X-W of the TPRs, and N-glycosylated. These other glycosylations can also facilitate secretion. As to expression, expressed in epithelial cells of the colon, fallopian tube, skin, breast, prostate, epididymis, liver, pancreatic islets and bile ducts, as well as by vascular endothelial cells, smooth muscle cells, fibroblasts, cortical and ganglionic neurons and cardiac myocytes. Also expressed by malignant epithelial cells in colon cancer, as well as breast, prostate, renal and skin tumors. Expression is significantly reduced in colon cancer compared to normal colon.

The protein localises to the secreted. The protein resides in the extracellular space. It localises to the extracellular matrix. The chain is ADAMTS-like protein 3 (ADAMTSL3) from Homo sapiens (Human).